The sequence spans 390 residues: ATP phosphoribosyltransferase regulatory subunit (390 aa).

It belongs to the class-II aminoacyl-tRNA synthetase family. HisZ subfamily. Heteromultimer composed of HisG and HisZ subunits.

The protein resides in the cytoplasm. It functions in the pathway amino-acid biosynthesis; L-histidine biosynthesis; L-histidine from 5-phospho-alpha-D-ribose 1-diphosphate: step 1/9. Functionally, required for the first step of histidine biosynthesis. May allow the feedback regulation of ATP phosphoribosyltransferase activity by histidine. This Nitrosomonas eutropha (strain DSM 101675 / C91 / Nm57) protein is ATP phosphoribosyltransferase regulatory subunit.